The following is a 127-amino-acid chain: uncharacterized protein (127 aa).

The tract at residues 69–94 (GDGGSVPEKGKHGILGAQGQEHPGLN) is disordered.

This is an uncharacterized protein from Homo sapiens (Human).